We begin with the raw amino-acid sequence, 282 residues long: Pyrroline-5-carboxylate reductase (282 aa).

It belongs to the pyrroline-5-carboxylate reductase family.

The catalysed reaction is L-proline + NADP(+) = (S)-1-pyrroline-5-carboxylate + NADPH + 2 H(+). It catalyses the reaction L-proline + NAD(+) = (S)-1-pyrroline-5-carboxylate + NADH + 2 H(+). Its pathway is amino-acid biosynthesis; L-proline biosynthesis; L-proline from L-glutamate 5-semialdehyde: step 1/1. The polypeptide is Pyrroline-5-carboxylate reductase (pro3) (Schizosaccharomyces pombe (strain 972 / ATCC 24843) (Fission yeast)).